A 344-amino-acid polypeptide reads, in one-letter code: Protein PopA1 (344 aa).

Disordered regions lie at residues 1 to 28, 58 to 108, 134 to 156, 211 to 242, and 268 to 311; these read MSVGNIQSPSNLPGLQNLNLNTNTNSQQ, SAGG…DANN, QPGGNDKGNGVGGANGAKGAGGQ, GNGVNGNQANGPQNAGDVNGANGADDGSEDQG, and GGGN…NLQS. 2 stretches are compositionally biased toward low complexity: residues 8–28 and 65–83; these read SPSNLPGLQNLNLNTNTNSQQ and NTGNAPAKDGNANAGANDP. Positions 89-108 are enriched in polar residues; sequence SKSQGPQSANKTGNVDDANN. Residues 138 to 156 show a composition bias toward gly residues; it reads NDKGNGVGGANGAKGAGGQ. The segment covering 215–235 has biased composition (low complexity); that stretch reads NGNQANGPQNAGDVNGANGAD. Residues 268–279 are compositionally biased toward gly residues; it reads GGGNQAQGGSKG. Low complexity predominate over residues 280–294; sequence AGNASPASGANPGAN. The segment covering 295 to 311 has biased composition (polar residues); sequence QPGSADDQSSGQNNLQS.

In terms of processing, popA2 and PopA3 are produced from PopA1.

The protein localises to the secreted. Acts as a specific hypersensitive response (HR) elicitor. Has activity on tobacco (non-host plant) and petunia but is without activity on tomato (host plant); PopA3 seems to be more active than a PopA1-PopA2 mixture. The sequence is that of Protein PopA1 (popA) from Ralstonia nicotianae (strain ATCC BAA-1114 / GMI1000) (Ralstonia solanacearum).